Reading from the N-terminus, the 759-residue chain is Pseudocleavage protein nop-1 (759 aa).

5 disordered regions span residues 1–46, 334–361, 379–413, 440–495, and 732–759; these read MSAP…SSIF, KIFP…MDKK, LSVN…NLSQ, QSSR…KKER, and ESDG…GAKI. Positions 10 to 42 are enriched in basic and acidic residues; that stretch reads DIHSDDRDHADHQTKKEKHWFEEKSEQNGENRR. The span at 448–465 shows a compositional bias: low complexity; sequence TGNSSISSGVGSIASGTS. The span at 473 to 482 shows a compositional bias: polar residues; that stretch reads GSRSGQSISR. Basic and acidic residues predominate over residues 485–495; sequence SRRDDEGKKER. A compositionally biased stretch (polar residues) spans 736–759; that stretch reads PASSNDDFDTQSTASTSTVFGAKI.

It localises to the nucleus. Its subcellular location is the cytoplasm. It is found in the cell cortex. The protein localises to the cleavage furrow. Its function is as follows. Required for formation of the pseudocleavage furrow during the first cleavage of the embryo and also mediates aster-induced furrowing during cytokinesis. Promotes cortical recruitment of ani-1 and nmy-2 during pseudocleavage and cytokinesis and promotes the accumulation of actin at furrowing regions. Regulates establishment of embryonic cell polarity. The protein is Pseudocleavage protein nop-1 (nop-1) of Caenorhabditis elegans.